A 528-amino-acid polypeptide reads, in one-letter code: Carboxysome shell carbonic anhydrase (528 aa).

Positions 17–47 are disordered; sequence PIAPNPRWQKENPTAHGSTDTGGFGYNGGNE. A Zn(2+)-binding site is contributed by C184. The active-site Proton acceptor is the D186. Residues H252 and C263 each contribute to the Zn(2+) site.

The protein belongs to the beta-class carbonic anhydrase family. CsoSCA subfamily. Homodimer. Zn(2+) serves as cofactor.

Its subcellular location is the carboxysome. The enzyme catalyses hydrogencarbonate + H(+) = CO2 + H2O. With respect to regulation, inhibited by ethoxyzolamide and dithiothreitol (in crude extracts upon expression in E.coli). Reversible hydration of carbon dioxide. This bacteria encodes at least 3 CA enzymes. Essential for chemolithotrophic carbon dioxide fixation, supplies CO(2) to RuBisCO (ribulose bisphosphate carboxylase, cbbL-cbbS) in the carboxysome. The sequence is that of Carboxysome shell carbonic anhydrase from Hydrogenovibrio crunogenus (strain DSM 25203 / XCL-2) (Thiomicrospira crunogena).